The chain runs to 88 residues: Small ribosomal subunit protein uS15 (88 aa).

The protein belongs to the universal ribosomal protein uS15 family. As to quaternary structure, part of the 30S ribosomal subunit. Forms a bridge to the 50S subunit in the 70S ribosome, contacting the 23S rRNA.

Functionally, one of the primary rRNA binding proteins, it binds directly to 16S rRNA where it helps nucleate assembly of the platform of the 30S subunit by binding and bridging several RNA helices of the 16S rRNA. In terms of biological role, forms an intersubunit bridge (bridge B4) with the 23S rRNA of the 50S subunit in the ribosome. The chain is Small ribosomal subunit protein uS15 from Mycoplasma mycoides subsp. mycoides SC (strain CCUG 32753 / NCTC 10114 / PG1).